A 420-amino-acid chain; its full sequence is MIOREX complex component 9 (420 aa).

2 helical membrane passes run 125 to 145 (VYKVSPFFIIFATASIFTFIL) and 149 to 169 (IVVIPLIFHFFFPLLIMFFFF).

As to quaternary structure, associates with the mitochondrial ribosome.

It localises to the mitochondrion. The protein localises to the mitochondrion membrane. Component of MIOREX complexes, large expressome-like assemblies of ribosomes with factors involved in all the steps of post-transcriptional gene expression. In Saccharomyces cerevisiae (strain ATCC 204508 / S288c) (Baker's yeast), this protein is MIOREX complex component 9.